A 296-amino-acid chain; its full sequence is Enoyl-CoA hydratase domain-containing protein 2, mitochondrial (296 aa).

Lys-101 carries the post-translational modification N6-acetyllysine; alternate. The residue at position 101 (Lys-101) is an N6-succinyllysine; alternate.

The protein belongs to the enoyl-CoA hydratase/isomerase family.

It localises to the mitochondrion. This chain is Enoyl-CoA hydratase domain-containing protein 2, mitochondrial (ECHDC2), found in Bos taurus (Bovine).